A 496-amino-acid polypeptide reads, in one-letter code: Glutamyl-tRNA(Gln) amidotransferase subunit A (496 aa).

Active-site charge relay system residues include K75 and S150. S174 functions as the Acyl-ester intermediate in the catalytic mechanism.

Belongs to the amidase family. GatA subfamily. Heterotrimer of A, B and C subunits.

The enzyme catalyses L-glutamyl-tRNA(Gln) + L-glutamine + ATP + H2O = L-glutaminyl-tRNA(Gln) + L-glutamate + ADP + phosphate + H(+). In terms of biological role, allows the formation of correctly charged Gln-tRNA(Gln) through the transamidation of misacylated Glu-tRNA(Gln) in organisms which lack glutaminyl-tRNA synthetase. The reaction takes place in the presence of glutamine and ATP through an activated gamma-phospho-Glu-tRNA(Gln). The protein is Glutamyl-tRNA(Gln) amidotransferase subunit A of Burkholderia thailandensis (strain ATCC 700388 / DSM 13276 / CCUG 48851 / CIP 106301 / E264).